Consider the following 418-residue polypeptide: Equilibrative nucleotide transporter 6 (418 aa).

The next 11 helical transmembrane spans lie at 19 to 39 (AMIVYCILGFGSLISWNSMLT), 56 to 76 (VLTLVYQPFAFGAIVILAYHE), 86 to 106 (LIGYILYTISTFLLIVLDLAT), 112 to 132 (FGPYTGLCAVVAAFGLADATV), 142 to 162 (LMCPELVQSYMGGMAVAGALT), 186 to 206 (MFLAISTCIELLSVMLYAYVL), 264 to 284 (HAVNLFLIYVCTLSIFPGFLY), 291 to 311 (GLGAWYALVLVAMYNCWDLVG), 326 to 346 (KLITIAVLSRYLLIPAFYFTA), 353 to 373 (WMIMLVSVLGLTNGHLTVCIM), and 392 to 412 (LVIFLLGGIFAGVALDWLWLI).

Belongs to the SLC29A/ENT transporter (TC 2.A.57) family. In terms of tissue distribution, expressed in leaves and siliques.

Its subcellular location is the cell membrane. In terms of biological role, nucleoside transporter that can mediate uptake of adenosine, uridine, guanosine or cytidine when expressed in a heterologous system (yeast). In Arabidopsis thaliana (Mouse-ear cress), this protein is Equilibrative nucleotide transporter 6 (ENT6).